The following is a 132-amino-acid chain: Ribosome-binding factor A (132 aa).

The protein belongs to the RbfA family. As to quaternary structure, monomer. Binds 30S ribosomal subunits, but not 50S ribosomal subunits or 70S ribosomes.

The protein localises to the cytoplasm. In terms of biological role, one of several proteins that assist in the late maturation steps of the functional core of the 30S ribosomal subunit. Associates with free 30S ribosomal subunits (but not with 30S subunits that are part of 70S ribosomes or polysomes). Required for efficient processing of 16S rRNA. May interact with the 5'-terminal helix region of 16S rRNA. This Treponema denticola (strain ATCC 35405 / DSM 14222 / CIP 103919 / JCM 8153 / KCTC 15104) protein is Ribosome-binding factor A.